The chain runs to 152 residues: Transcriptional regulator MraZ (152 aa).

SpoVT-AbrB domains are found at residues 5–52 (ASAI…PIHE) and 81–124 (AHEV…DEQA).

It belongs to the MraZ family. Forms oligomers.

It localises to the cytoplasm. The protein resides in the nucleoid. The polypeptide is Transcriptional regulator MraZ (Shewanella putrefaciens (strain CN-32 / ATCC BAA-453)).